A 319-amino-acid polypeptide reads, in one-letter code: 2-oxoglutarate and iron-dependent oxygenase domain-containing protein 3 (319 aa).

The tract at residues 1–34 (MAPQRRAATKAPEGNGAAERRNRSSTKKDRAPRE) is disordered. Topologically, residues 1-42 (MAPQRRAATKAPEGNGAAERRNRSSTKKDRAPREVQRLWQRP) are cytoplasmic. Residues 18–34 (AERRNRSSTKKDRAPRE) are compositionally biased toward basic and acidic residues. Residues 43-65 (WLRTAGLGAGFVLTALLLWSSLG) form a helical; Signal-anchor for type II membrane protein membrane-spanning segment. The Lumenal segment spans residues 66-319 (ADDGVAEVLA…DHGIEDPAFP (254 aa)). The Fe2OG dioxygenase domain maps to 207–309 (KPTFFSRINS…AITIAFSCNP (103 aa)). Asparagine 215 is a glycosylation site (N-linked (GlcNAc...) asparagine). Positions 230, 232, and 288 each coordinate Fe cation. The active site involves arginine 298. 2-oxoglutarate is bound at residue arginine 298.

Belongs to the OGFOD3 family. The cofactor is Fe(2+). It depends on L-ascorbate as a cofactor.

It localises to the membrane. In Homo sapiens (Human), this protein is 2-oxoglutarate and iron-dependent oxygenase domain-containing protein 3 (OGFOD3).